A 206-amino-acid polypeptide reads, in one-letter code: LexA repressor (206 aa).

Positions 28 to 48 (RAEIATRLGFKSANAAEEHLK) form a DNA-binding region, H-T-H motif. Residues Ser123 and Lys160 each act as for autocatalytic cleavage activity in the active site.

Belongs to the peptidase S24 family. Homodimer.

The enzyme catalyses Hydrolysis of Ala-|-Gly bond in repressor LexA.. In terms of biological role, represses a number of genes involved in the response to DNA damage (SOS response), including recA and lexA. In the presence of single-stranded DNA, RecA interacts with LexA causing an autocatalytic cleavage which disrupts the DNA-binding part of LexA, leading to derepression of the SOS regulon and eventually DNA repair. The sequence is that of LexA repressor from Shewanella baltica (strain OS223).